We begin with the raw amino-acid sequence, 334 residues long: Protein FAM50B (334 aa).

Position 2 is an N-acetylalanine (A2). Positions 122–175 (FTLDEEEGDQEDSRQAESAEAHSAGAKKNLGKNPDVDTSFLPDREREEEENRLR) are disordered. Composition is skewed to basic and acidic residues over residues 132-141 (EDSRQAESAE) and 163-175 (PDREREEEENRLR).

This sequence belongs to the FAM50 family. In terms of tissue distribution, widely expressed. Abundant in testis, where it is expressed in seminiferous tubules, not in the interstitium. At the cellular level, expressed in primary spermatocytes and round spermatids, but not detectable in spermatogonia, elongating spermatids, mature spermatozoa, Sertoli cells or Leydig cells.

The chain is Protein FAM50B (Fam50b) from Mus musculus (Mouse).